The following is a 286-amino-acid chain: Pantothenate synthetase (286 aa).

Residue 30–37 participates in ATP binding; that stretch reads MGNLHEGH. Catalysis depends on His37, which acts as the Proton donor. Gln64 is a binding site for (R)-pantoate. Gln64 is a binding site for beta-alanine. ATP is bound at residue 151-154; sequence GKKD. Gln157 provides a ligand contact to (R)-pantoate. ATP-binding positions include Leu180 and 188–191; that span reads LSSR.

The protein belongs to the pantothenate synthetase family. As to quaternary structure, homodimer.

It is found in the cytoplasm. It catalyses the reaction (R)-pantoate + beta-alanine + ATP = (R)-pantothenate + AMP + diphosphate + H(+). It functions in the pathway cofactor biosynthesis; (R)-pantothenate biosynthesis; (R)-pantothenate from (R)-pantoate and beta-alanine: step 1/1. Catalyzes the condensation of pantoate with beta-alanine in an ATP-dependent reaction via a pantoyl-adenylate intermediate. This Leptothrix cholodnii (strain ATCC 51168 / LMG 8142 / SP-6) (Leptothrix discophora (strain SP-6)) protein is Pantothenate synthetase.